A 338-amino-acid polypeptide reads, in one-letter code: Ketol-acid reductoisomerase (NADP(+)) (338 aa).

Positions 1–181 (MQVYYDKDAD…GGGRAGVIET (181 aa)) constitute a KARI N-terminal Rossmann domain. NADP(+) is bound by residues 24 to 27 (YGSQ), Arg-47, Ser-50, Ser-52, and 82 to 85 (DEHQ). His-107 is a catalytic residue. Residue Gly-133 coordinates NADP(+). The KARI C-terminal knotted domain maps to 182–327 (SFREETETDL…ERLRGMMPWI (146 aa)). Asp-190, Glu-194, Glu-226, and Glu-230 together coordinate Mg(2+). Substrate is bound at residue Ser-251.

This sequence belongs to the ketol-acid reductoisomerase family. Mg(2+) is required as a cofactor.

The enzyme catalyses (2R)-2,3-dihydroxy-3-methylbutanoate + NADP(+) = (2S)-2-acetolactate + NADPH + H(+). The catalysed reaction is (2R,3R)-2,3-dihydroxy-3-methylpentanoate + NADP(+) = (S)-2-ethyl-2-hydroxy-3-oxobutanoate + NADPH + H(+). The protein operates within amino-acid biosynthesis; L-isoleucine biosynthesis; L-isoleucine from 2-oxobutanoate: step 2/4. Its pathway is amino-acid biosynthesis; L-valine biosynthesis; L-valine from pyruvate: step 2/4. Functionally, involved in the biosynthesis of branched-chain amino acids (BCAA). Catalyzes an alkyl-migration followed by a ketol-acid reduction of (S)-2-acetolactate (S2AL) to yield (R)-2,3-dihydroxy-isovalerate. In the isomerase reaction, S2AL is rearranged via a Mg-dependent methyl migration to produce 3-hydroxy-3-methyl-2-ketobutyrate (HMKB). In the reductase reaction, this 2-ketoacid undergoes a metal-dependent reduction by NADPH to yield (R)-2,3-dihydroxy-isovalerate. The chain is Ketol-acid reductoisomerase (NADP(+)) from Alkalilimnicola ehrlichii (strain ATCC BAA-1101 / DSM 17681 / MLHE-1).